The sequence spans 390 residues: Pre-mycofactocin synthase (390 aa).

An FMN hydroxy acid dehydrogenase domain is found at 1 to 383 (MADEWFETVA…RSDDILIPAD (383 aa)). Residues serine 108, glutamine 128, threonine 156, and lysine 254 each contribute to the FMN site. Residue histidine 278 is the Proton acceptor of the active site. Residues 309–313 (DGGIR) and 332–333 (GR) contribute to the FMN site.

The protein belongs to the FMN-dependent alpha-hydroxy acid dehydrogenase family. FMN is required as a cofactor.

It catalyses the reaction 3-amino-5-[(4-hydroxyphenyl)methyl]-4,4-dimethyl-2-pyrrolidin-2-one + O2 + H2O = pre-mycofactocin + H2O2 + NH4(+). Involved in the biosynthesis of the enzyme cofactor mycofactocin (MFT). Catalyzes the oxidative deamination of AHDP (3-amino-5-[(4-hydroxyphenyl)methyl]-4,4-dimethyl-2-pyrrolidin-2-one), forming an alpha-keto amide moiety on the resulting molecule, which is called pre-mycofactocin (PMFT). This reaction occurs via a 5-[(4-hydroxyphenyl)methyl]-3-imino-4,4-dimethylpyrrolidin-2-one intermediate, which converts to PMFT. The alpha-keto amide moiety is the redox-active center for the redox activity of mycofactocin. The protein is Pre-mycofactocin synthase of Mycobacterium ulcerans (strain Agy99).